The following is a 474-amino-acid chain: 3-isopropylmalate dehydratase large subunit (474 aa).

Positions 293 to 313 are disordered; that stretch reads GTTPGQGIGITEEIPAPEDLP. 3 residues coordinate [4Fe-4S] cluster: C348, C408, and C411.

This sequence belongs to the aconitase/IPM isomerase family. LeuC type 1 subfamily. As to quaternary structure, heterodimer of LeuC and LeuD. [4Fe-4S] cluster serves as cofactor.

It catalyses the reaction (2R,3S)-3-isopropylmalate = (2S)-2-isopropylmalate. It participates in amino-acid biosynthesis; L-leucine biosynthesis; L-leucine from 3-methyl-2-oxobutanoate: step 2/4. Catalyzes the isomerization between 2-isopropylmalate and 3-isopropylmalate, via the formation of 2-isopropylmaleate. In Natronomonas pharaonis (strain ATCC 35678 / DSM 2160 / CIP 103997 / JCM 8858 / NBRC 14720 / NCIMB 2260 / Gabara) (Halobacterium pharaonis), this protein is 3-isopropylmalate dehydratase large subunit.